A 371-amino-acid chain; its full sequence is MTRVTMDQDTENKVLVIKNMDSGYLVAGEQVTLEDVSYDATEPLAEDELMVQLLYATYDLFKRDLASSSADATELRGRKPVETMSIAQVIKSNNKQFQEGDMVIGRLPVQQYVLIKADDATELKLLENPCEFDDIRLFLSVLGVPGLLAFSSLYEIGRPKKGETILIAGASDEIGQLVGQMARLEGLKVFGSVESDEKLDFLITELGFDGGFNYAKESPYEALPRLVPNGIDIYYDNLSWMSRLNIGGLDTHFDLLGSRHLNAAFSSMRRYGRIMFYGTIAEQTVLDPIIGMFLHNTVLKRLTIRGFGLSDPSFGKKWGKLHMERMQQWVKEEKLKIPTFEITGMDNAAKAFVEAFYSSENTHTHTILAVT.

Residues 172 to 175 (DEIG), K198, Y214, N237, 277 to 283 (YGTIAEQ), and 307 to 309 (FGL) contribute to the NADP(+) site.

Belongs to the NADP-dependent oxidoreductase L4BD family.

Its pathway is secondary metabolite biosynthesis. Its function is as follows. NADP-dependent oxidoreductase; part of the lna gene cluster that mediates the biosynthesis of diastereomeric piperazines. Lna and lnb clusters encode sets of enzymes that produce overlapping sets of previously undescribed metabolites such as piperazinomycin-like metabolites or morpholine. The lna and lnb biosynthetic pathways appear to be part of a signaling network that controls the formation of sclerotia, a resilient overwintering structure. One primary function of the non-canonical nonribosomal peptide synthetases lnaA and lnbA consists in the reduction of L-tyrosine. The presence in the clusters of tailoring enzymes such as the oxidoreductases lnaB, lnbB, lnaE or lnbE, as well as of the cytochrome P450 monooxygenases lnaC, lnaD, or lnbC, might explain formation of various diastereomeric piperazines. The chain is NADP-dependent oxidoreductase lnaE from Aspergillus flavus (strain ATCC 200026 / FGSC A1120 / IAM 13836 / NRRL 3357 / JCM 12722 / SRRC 167).